Reading from the N-terminus, the 1367-residue chain is Paired amphipathic helix protein Sin3-like 2 (1367 aa).

The disordered stretch occupies residues Gln14 to Asn44. Gly residues predominate over residues Thr33–Gly42. PAH domains follow at residues Gln46–Gly116 and Lys130–Ser200. The segment at Ser212 to Ser322 is disordered. Composition is skewed to basic and acidic residues over residues Met230–Leu286 and Phe299–Gly311. The region spanning Leu327–Cys396 is the PAH 3 domain. Disordered stretches follow at residues Glu417–Ser446, Asp786–Pro883, Gln912–Asp946, and Ala958–Glu1031. Composition is skewed to basic and acidic residues over residues Val424–Ser446 and Ser806–Asn819. Polar residues-rich tracts occupy residues Ala851 to Ser876 and Gln912 to Asp923. Positions Ala958–Glu967 are enriched in basic and acidic residues. Acidic residues-rich tracts occupy residues Ala968–Glu989 and Ile997–Glu1016. Ser1023 carries the phosphoserine modification.

It localises to the nucleus. Acts as a transcriptional repressor. Plays roles in regulating gene expression and genome stability. The protein is Paired amphipathic helix protein Sin3-like 2 (SNL2) of Arabidopsis thaliana (Mouse-ear cress).